The sequence spans 550 residues: Carnitine transporter (550 aa).

12 helical membrane passes run 15–35 (FLAV…AIYS), 53–73 (FTTP…GLAF), 92–112 (SWIF…WGFL), 137–157 (VAYS…LASI), 196–216 (MFLL…AVTF), 230–250 (FMTK…SSYV), 263–283 (VCLG…TQFI), 317–337 (WTVF…LFVT), 347–367 (EVIF…FGVF), 401–421 (LLPA…VFLA), 451–471 (LFWC…KAPL), and 477–497 (ATIV…YGLV).

Belongs to the BCCT transporter (TC 2.A.15) family.

It localises to the cell inner membrane. With respect to regulation, inhibited by the protonophore 3,3',4',5-tetrachlorosalicylanilide (TCS). Not activated by osmolarity. Catalyzes the energy-dependent uptake of carnitine and is essential for growth on carnitine. Can also mediate the uptake of choline. Is probably a proton:substrate symporter. This chain is Carnitine transporter, found in Acinetobacter baumannii (strain ATCC 19606 / DSM 30007 / JCM 6841 / CCUG 19606 / CIP 70.34 / NBRC 109757 / NCIMB 12457 / NCTC 12156 / 81).